A 150-amino-acid polypeptide reads, in one-letter code: D-aminoacyl-tRNA deacylase (150 aa).

The short motif at 138–139 is the Gly-cisPro motif, important for rejection of L-amino acids element; sequence GP.

It belongs to the DTD family. In terms of assembly, homodimer.

The protein resides in the cytoplasm. It catalyses the reaction glycyl-tRNA(Ala) + H2O = tRNA(Ala) + glycine + H(+). The enzyme catalyses a D-aminoacyl-tRNA + H2O = a tRNA + a D-alpha-amino acid + H(+). An aminoacyl-tRNA editing enzyme that deacylates mischarged D-aminoacyl-tRNAs. Also deacylates mischarged glycyl-tRNA(Ala), protecting cells against glycine mischarging by AlaRS. Acts via tRNA-based rather than protein-based catalysis; rejects L-amino acids rather than detecting D-amino acids in the active site. By recycling D-aminoacyl-tRNA to D-amino acids and free tRNA molecules, this enzyme counteracts the toxicity associated with the formation of D-aminoacyl-tRNA entities in vivo and helps enforce protein L-homochirality. The chain is D-aminoacyl-tRNA deacylase from Akkermansia muciniphila (strain ATCC BAA-835 / DSM 22959 / JCM 33894 / BCRC 81048 / CCUG 64013 / CIP 107961 / Muc).